Consider the following 122-residue polypeptide: MIQQESQLKVADNTGAKKVKCFKVLGGSRRRYATVGDVIVCSVRDVEPDSSVKKGDVVKAVIVRTRNDIRRKDGSTLRFDTNSCVIIDDKGNPKGTRIFGPVAREIRDRGFIKISSLAPEVI.

The protein belongs to the universal ribosomal protein uL14 family. Part of the 50S ribosomal subunit. Forms a cluster with proteins L3 and L19. In the 70S ribosome, L14 and L19 interact and together make contacts with the 16S rRNA in bridges B5 and B8.

Functionally, binds to 23S rRNA. Forms part of two intersubunit bridges in the 70S ribosome. In Chlamydia muridarum (strain MoPn / Nigg), this protein is Large ribosomal subunit protein uL14.